The sequence spans 291 residues: 3-hydroxy-5-phosphonooxypentane-2,4-dione thiolase (291 aa).

Catalysis depends on K203, which acts as the Schiff-base intermediate with substrate.

Belongs to the DeoC/FbaB aldolase family. As to quaternary structure, homodecamer.

The protein localises to the cytoplasm. The catalysed reaction is dihydroxyacetone phosphate + acetyl-CoA = 3-hydroxy-2,4-dioxopentyl phosphate + CoA. In terms of biological role, involved in the degradation of phospho-AI-2, thereby terminating induction of the lsr operon and closing the AI-2 signaling cycle. Catalyzes the transfer of an acetyl moiety from 3-hydroxy-5-phosphonooxypentane-2,4-dione to CoA to form glycerone phosphate and acetyl-CoA. This chain is 3-hydroxy-5-phosphonooxypentane-2,4-dione thiolase, found in Yersinia pestis bv. Antiqua (strain Antiqua).